The sequence spans 61 residues: Metallothionein-1M (61 aa).

Residues 1–29 (MDPNCSCTTGVSCACTGSCTCKECKCTSC) form a beta region. A divalent metal cation contacts are provided by Cys5, Cys7, Cys13, Cys15, Cys19, Cys21, Cys24, Cys26, Cys29, Cys33, Cys34, Cys36, Cys37, Cys41, Cys44, Cys48, Cys50, Cys57, Cys59, and Cys60. The alpha stretch occupies residues 30–61 (KKSCCSCCPVGCAKCAHGCVCKGTLENCSCCA).

It belongs to the metallothionein superfamily. Type 1 family. In terms of assembly, monomer.

Functionally, metallothioneins have a high content of cysteine residues that bind various heavy metals; these proteins are transcriptionally regulated by both heavy metals and glucocorticoids. This chain is Metallothionein-1M (MT1M), found in Homo sapiens (Human).